The following is a 414-amino-acid chain: 4-hydroxy-3-methylbut-2-en-1-yl diphosphate synthase (flavodoxin) (414 aa).

Residues Cys304, Cys307, Cys350, and Glu357 each contribute to the [4Fe-4S] cluster site.

It belongs to the IspG family. It depends on [4Fe-4S] cluster as a cofactor.

It carries out the reaction (2E)-4-hydroxy-3-methylbut-2-enyl diphosphate + oxidized [flavodoxin] + H2O + 2 H(+) = 2-C-methyl-D-erythritol 2,4-cyclic diphosphate + reduced [flavodoxin]. It functions in the pathway isoprenoid biosynthesis; isopentenyl diphosphate biosynthesis via DXP pathway; isopentenyl diphosphate from 1-deoxy-D-xylulose 5-phosphate: step 5/6. Functionally, converts 2C-methyl-D-erythritol 2,4-cyclodiphosphate (ME-2,4cPP) into 1-hydroxy-2-methyl-2-(E)-butenyl 4-diphosphate. The sequence is that of 4-hydroxy-3-methylbut-2-en-1-yl diphosphate synthase (flavodoxin) from Aromatoleum aromaticum (strain DSM 19018 / LMG 30748 / EbN1) (Azoarcus sp. (strain EbN1)).